The chain runs to 211 residues: Homeobox protein Rhox5 (211 aa).

Residues 38-129 (FFQAGEGRDE…PLRRPGSTQR (92 aa)) form a disordered region. Composition is skewed to gly residues over residues 52–62 (GQPGEGAVGTE) and 70–84 (GGEGHFGPGVPGPVG). Positions 102 to 119 (HEPVAEGTESVKSEDKQM) are enriched in basic and acidic residues. The segment at residues 119–176 (MPLRRPGSTQRRLAELERILLSSGSSSGGRSLIDGWISVCPECRNWFKIRRAAYRRNR) is a DNA-binding region (homeobox; atypical).

In terms of tissue distribution, highly expressed in placenta. Lower levels in testis, epididymis, ovary and skeletal muscle.

The protein localises to the nucleus. Functionally, transcription factor required for differentiation of embryonic stem cells (ESCs) into primordial germ cells. The sequence is that of Homeobox protein Rhox5 (Rhox5) from Rattus norvegicus (Rat).